The primary structure comprises 157 residues: Serine-protein kinase RsbW (157 aa).

This sequence belongs to the anti-sigma-factor family.

It carries out the reaction L-seryl-[protein] + ATP = O-phospho-L-seryl-[protein] + ADP + H(+). The enzyme catalyses L-threonyl-[protein] + ATP = O-phospho-L-threonyl-[protein] + ADP + H(+). In terms of biological role, negative regulator of sigma-B activity. Phosphorylates and inactivates its specific antagonist protein, RsbV. Upon phosphorylation of RsbV, RsbW is released and binds to sigma-B, thereby blocking its ability to form an RNA polymerase holoenzyme (E-sigma-B). The sequence is that of Serine-protein kinase RsbW from Listeria monocytogenes serotype 4b (strain CLIP80459).